The primary structure comprises 73 residues: Protein BP4C (73 aa).

Pollen specific.

This Brassica napus (Rape) protein is Protein BP4C (BP4C).